The primary structure comprises 387 residues: UDP-N-acetylglucosamine--N-acetylmuramyl-(pentapeptide) pyrophosphoryl-undecaprenol N-acetylglucosamine transferase (387 aa).

Residues 14–16 (TGG), asparagine 124, arginine 167, serine 195, and glutamine 296 each bind UDP-N-acetyl-alpha-D-glucosamine. Residues 366–387 (LPQQNSIEEDSTFEKNQEGAVA) are disordered. Basic and acidic residues predominate over residues 377–387 (TFEKNQEGAVA).

Belongs to the glycosyltransferase 28 family. MurG subfamily.

Its subcellular location is the cell inner membrane. It carries out the reaction di-trans,octa-cis-undecaprenyl diphospho-N-acetyl-alpha-D-muramoyl-L-alanyl-D-glutamyl-meso-2,6-diaminopimeloyl-D-alanyl-D-alanine + UDP-N-acetyl-alpha-D-glucosamine = di-trans,octa-cis-undecaprenyl diphospho-[N-acetyl-alpha-D-glucosaminyl-(1-&gt;4)]-N-acetyl-alpha-D-muramoyl-L-alanyl-D-glutamyl-meso-2,6-diaminopimeloyl-D-alanyl-D-alanine + UDP + H(+). Its pathway is cell wall biogenesis; peptidoglycan biosynthesis. Its function is as follows. Cell wall formation. Catalyzes the transfer of a GlcNAc subunit on undecaprenyl-pyrophosphoryl-MurNAc-pentapeptide (lipid intermediate I) to form undecaprenyl-pyrophosphoryl-MurNAc-(pentapeptide)GlcNAc (lipid intermediate II). The polypeptide is UDP-N-acetylglucosamine--N-acetylmuramyl-(pentapeptide) pyrophosphoryl-undecaprenol N-acetylglucosamine transferase (Zymomonas mobilis subsp. mobilis (strain ATCC 31821 / ZM4 / CP4)).